Consider the following 257-residue polypeptide: Achaete-scute complex protein T3 (257 aa).

Residues 83–145 (PSVARRNARE…RIAVEYIRGL (63 aa)) enclose the bHLH domain. Positions 161–221 (YNSADESSND…SEISGGGYIK (61 aa)) are disordered. Composition is skewed to low complexity over residues 165 to 184 (DESSNDGSSYNDYNDSLDSS) and 193 to 213 (QSAQSHSYHSASPTPSYSGSE).

In terms of assembly, efficient DNA binding requires dimerization with another bHLH protein. L(1)SC, SC and AC strongly label the presumptive stomatogastric nervous system, while ASE is more prominent in the presumptive procephalic lobe.

In terms of biological role, AS-C proteins are involved in the determination of the neuronal precursors in the peripheral nervous system and the central nervous system. In Drosophila melanogaster (Fruit fly), this protein is Achaete-scute complex protein T3 (l(1)sc).